The chain runs to 173 residues: MISKDQLVNEGIRAREVRLIGQNGDQLGIKSRQEALEIAGRANLDLVLVAANAKPPVCRIMDYGKFRFEQQKKEKEARKNQKIINLKEVRLSPTIDEHDFNTKLRNAIKFLEKGDKVKASIRFKGRAITHKEIGQRVLDRFSEACAEVATVETKPKMDGRSMFLMLAPKNEKQ.

It belongs to the IF-3 family. As to quaternary structure, monomer.

The protein resides in the cytoplasm. In terms of biological role, IF-3 binds to the 30S ribosomal subunit and shifts the equilibrium between 70S ribosomes and their 50S and 30S subunits in favor of the free subunits, thus enhancing the availability of 30S subunits on which protein synthesis initiation begins. The polypeptide is Translation initiation factor IF-3 (Bacillus subtilis (strain 168)).